Reading from the N-terminus, the 373-residue chain is NAD-dependent protein deacetylase SIR2rp1 (373 aa).

In terms of domain architecture, Deacetylase sirtuin-type spans 12-349; that stretch reads HALGEPTVEG…LKLAECLGLR (338 aa). NAD(+)-binding positions include 39–59 and 124–127; these read GAGA…TGIY and QNID. The Proton acceptor role is filled by His144. 4 residues coordinate Zn(2+): Cys152, Cys155, Cys176, and Cys179. Residues 216 to 218 and 241 to 243 each bind NAD(+); these read GTS and NRE. Positions 263-313 are disordered; it reads DAVAKEGRSSSSQSRSPSASARREEGGTEDGSSSPNEEVEDASTSSSSDGY. The span at 271–282 shows a compositional bias: low complexity; that stretch reads SSSSQSRSPSAS. Cys335 contacts NAD(+).

It belongs to the sirtuin family. Class I subfamily. Requires Zn(2+) as cofactor.

The protein localises to the nucleus. The catalysed reaction is N(6)-acetyl-L-lysyl-[protein] + NAD(+) + H2O = 2''-O-acetyl-ADP-D-ribose + nicotinamide + L-lysyl-[protein]. Functionally, NAD-dependent deacetylase, which probably acts as a regulator of gene expression believed to help form modified chromatin structures on the genes it regulates. This is NAD-dependent protein deacetylase SIR2rp1 (SIR2rp1) from Leishmania major.